The primary structure comprises 292 residues: Peroxisomal 2,4-dienoyl-CoA reductase [(3E)-enoyl-CoA-producing] (292 aa).

Residues 35-40 (GGGSGI), 60-64 (RSLPR), and Asp-86 contribute to the NADP(+) site. Arg-60 contacts substrate. Substrate is bound by residues Arg-88, Phe-118, and 126–128 (SFN). Lys-151 is modified (N6-acetyllysine). Residues Lys-182 and 208 to 214 (PGAISGT) contribute to the NADP(+) site. Arg-219 serves as a coordination point for substrate. Phosphoserine is present on Ser-287. Positions 290–292 (AKL) match the Microbody targeting signal motif. Residue Lys-291 is modified to N6-acetyllysine.

The protein belongs to the short-chain dehydrogenases/reductases (SDR) family. 2,4-dienoyl-CoA reductase subfamily. In terms of assembly, monomer, dimer and oligomer.

It is found in the peroxisome. It carries out the reaction a (2E,4Z)-dienoyl-CoA + NADPH + H(+) = a 4,5-saturated-(3E)-enoyl-CoA + NADP(+). The catalysed reaction is a (2E,4E)-dienoyl-CoA + NADPH + H(+) = a 4,5-saturated-(3E)-enoyl-CoA + NADP(+). The enzyme catalyses (2E,4E)-hexadienoyl-CoA + NADPH + H(+) = (3E)-hexenoyl-CoA + NADP(+). It catalyses the reaction (2E,4E)-decadienoyl-CoA + NADPH + H(+) = (3E)-decenoyl-CoA + NADP(+). It carries out the reaction (2E,4Z,7Z,10Z,13Z,16Z,19Z)-docosaheptaenoyl-CoA + NADPH + H(+) = (3E,7Z,10Z,13Z,16Z,19Z)-docosahexaenoyl-CoA + NADP(+). Its function is as follows. Auxiliary enzyme of beta-oxidation. Participates in the degradation of unsaturated fatty enoyl-CoA esters having double bonds in both even- and odd-numbered positions in peroxisome. Catalyzes the NADP-dependent reduction of 2,4-dienoyl-CoA to yield trans-3-enoyl-CoA. Has activity towards short and medium chain 2,4-dienoyl-CoAs, but also towards 2,4,7,10,13,16,19-docosaheptaenoyl-CoA, suggesting that it does not constitute a rate limiting step in the peroxisomal degradation of docosahexaenoic acid. In Rattus norvegicus (Rat), this protein is Peroxisomal 2,4-dienoyl-CoA reductase [(3E)-enoyl-CoA-producing] (Decr2).